A 131-amino-acid polypeptide reads, in one-letter code: Large ribosomal subunit protein bL19 (131 aa).

The tract at residues 110–131 (KSARIAERTDDRAKKAKATAAE) is disordered. The span at 113–122 (RIAERTDDRA) shows a compositional bias: basic and acidic residues.

It belongs to the bacterial ribosomal protein bL19 family.

Its function is as follows. This protein is located at the 30S-50S ribosomal subunit interface and may play a role in the structure and function of the aminoacyl-tRNA binding site. This is Large ribosomal subunit protein bL19 from Azorhizobium caulinodans (strain ATCC 43989 / DSM 5975 / JCM 20966 / LMG 6465 / NBRC 14845 / NCIMB 13405 / ORS 571).